Reading from the N-terminus, the 68-residue chain is Arabinogalactan peptide 1 (68 aa).

An N-terminal signal peptide occupies residues 1 to 30 (MAGQLKSKIVAVAVAAVVVVASSLVGTASA). Serine 40 is lipidated: GPI-anchor amidated serine. Positions 41 to 68 (GATATAAAAPAFAAVSVAAAALGGYLFC) are cleaved as a propeptide — removed in mature form.

This sequence belongs to the AG-peptide AGP family. O-glycosylated on hydroxyprolines; noncontiguous hydroxylproline residues are glycosylated with arabinogalactan. As to expression, expressed in roots, stems, flowers and seeds.

It localises to the vacuole. Its subcellular location is the aleurone grain membrane. Its function is as follows. Proteoglycan that seems to be implicated in diverse developmental roles such as differentiation, cell-cell recognition, embryogenesis and programmed cell death. The polypeptide is Arabinogalactan peptide 1 (AGPEP1) (Oryza sativa subsp. japonica (Rice)).